The following is a 33-amino-acid chain: SIEIEIDGVTVTTEESRTLVDVAAEAGVYIPTL.

The 2Fe-2S ferredoxin-type domain maps to 1-33; that stretch reads SIEIEIDGVTVTTEESRTLVDVAAEAGVYIPTL.

It belongs to the complex I 75 kDa subunit family. As to quaternary structure, tetramer of an alpha and a gamma subunits (flavin-containing dimer), and a delta and a nickel-containing beta subunits (hydrogenase dimer). The cofactor is [4Fe-4S] cluster.

The protein localises to the cytoplasm. It catalyses the reaction H2 + NAD(+) = NADH + H(+). Subunits alpha and gamma of HoxS constitute an NADH--oxidoreductase. This chain is NAD-reducing hydrogenase HoxS subunit gamma (hoxU), found in Rhodococcus opacus (Nocardia opaca).